A 940-amino-acid chain; its full sequence is Serine/threonine-protein kinase PLK4 (940 aa).

Residues 12–265 (FKVLTLLGKG…LSAVLDHPFM (254 aa)) enclose the Protein kinase domain. ATP contacts are provided by residues 18–26 (LGKGSFACV) and Lys-41. Asp-136 (proton acceptor) is an active-site residue. 2 disordered regions span residues 262 to 353 (HPFM…DLSR) and 409 to 529 (RLFP…DAFV). Positions 273 to 305 (SKDSGSSNGGSIDSGIATISTASNATNNSSSSR) are enriched in low complexity. Polar residues-rich tracts occupy residues 337–349 (FKSGQDWQPNSQD), 440–465 (NPASSFSTSTHSTRQQMPDSQTQPWF), and 494–519 (GTQTSCSDKPSGLHSQQQPILFQHNN). Residues 563-676 (CLKKSFPPLC…TKFVQLVKSK (114 aa)) form the Cryptic POLO box 1 (CPB1) domain. The Cryptic POLO box 2 (CPB2) domain occupies 677–791 (TPKVTLYTKF…GRRPVNPVPP (115 aa)). Positions 857–935 (KVLKSIFVPN…LSSILGLLAN (79 aa)) constitute a POLO box domain.

The protein belongs to the protein kinase superfamily. Ser/Thr protein kinase family. CDC5/Polo subfamily. In terms of assembly, homodimer. Post-translationally, ubiquitinated; leading to its degradation by the proteasome.

Its subcellular location is the cytoplasm. The protein localises to the cytoskeleton. The protein resides in the microtubule organizing center. It is found in the centrosome. It localises to the centriole. It carries out the reaction L-seryl-[protein] + ATP = O-phospho-L-seryl-[protein] + ADP + H(+). The catalysed reaction is L-threonyl-[protein] + ATP = O-phospho-L-threonyl-[protein] + ADP + H(+). Functionally, serine/threonine-protein kinase that plays a central role in centriole duplication. Able to trigger procentriole formation on the surface of the parental centriole cylinder, leading to the recruitment of centriole biogenesis proteins such as sass6, cpap, ccp110, cep135 and gamma-tubulin. When overexpressed, it is able to induce centrosome amplification through the simultaneous generation of multiple procentrioles adjoining each parental centriole during S phase. Its central role in centriole replication suggests a possible role in tumorigenesis, centrosome aberrations being frequently observed in tumors. Also involved in deuterosome-mediated centriole amplification in multiciliated that can generate more than 100 centrioles. The chain is Serine/threonine-protein kinase PLK4 from Danio rerio (Zebrafish).